A 1044-amino-acid polypeptide reads, in one-letter code: Unconventional myosin-Ic (1044 aa).

One can recognise a Myosin motor domain in the interval 28-712 (GVQDFVLLEN…TLFATEDSLE (685 aa)). Residues Asn69, Tyr77, 120–129 (SGESGAGKTE), and 173–177 (NDNSS) contribute to the ATP site. N6-methyllysine is present on Lys364. Ser389 carries the phosphoserine modification. N6-acetyllysine is present on Lys467. Phosphoserine is present on Ser517. The tract at residues 589-611 (LLQLVEILRSKEPAYIRCIKPND) is actin-binding. IQ domains lie at 715-744 (RQSL…SAIC) and 738-767 (VKRS…AAQT). Ser845 and Ser1022 each carry phosphoserine. Residues 866–1040 (KDNYPQSVPR…NGHLAVVAPR (175 aa)) form the TH1 domain.

This sequence belongs to the TRAFAC class myosin-kinesin ATPase superfamily. Myosin family. As to quaternary structure, interacts (via its IQ motifs) with CABP1 and CIB1; the interaction with CABP1 and CIB1 is calcium-dependent. Interacts (via tail domain) with PLEKHB1 (via PH domain); the interaction is not affected by the presence or absence of calcium and CALM. Interacts with POLR1A. Interacts with POLR2A. Component of the B-WICH complex, at least composed of SMARCA5/SNF2H, BAZ1B/WSTF, SF3B1, DEK, MYO1C, ERCC6, MYBBP1A and DDX21. Interacts (via its IQ motifs) with CALM; this precludes interaction with YWHAB. Interacts with YWHAB; this precludes interaction with CALM. Interacts with RPS6. Interacts with actin. Interacts with LLPH. Interacts with GLUT4. Interacts (via its IQ motifs) with SH3BGRL3; the interaction is dependent on calcium and takes place at membrane ruffles.

Its subcellular location is the cytoplasm. It is found in the nucleus. The protein resides in the cell cortex. The protein localises to the cell projection. It localises to the stereocilium membrane. Its subcellular location is the cytoplasmic vesicle. It is found in the ruffle membrane. Myosins are actin-based motor molecules with ATPase activity. Unconventional myosins serve in intracellular movements. Their highly divergent tails are presumed to bind to membranous compartments, which would be moved relative to actin filaments. Involved in glucose transporter recycling in response to insulin by regulating movement of intracellular GLUT4-containing vesicles to the plasma membrane. Component of the hair cell's (the sensory cells of the inner ear) adaptation-motor complex. Acts as a mediator of adaptation of mechanoelectrical transduction in stereocilia of vestibular hair cells. Binds phosphoinositides and links the actin cytoskeleton to cellular membranes. This chain is Unconventional myosin-Ic (Myo1c), found in Rattus norvegicus (Rat).